The following is a 187-amino-acid chain: Peptidyl-tRNA hydrolase (187 aa).

A tRNA-binding site is contributed by tyrosine 18. The Proton acceptor role is filled by histidine 23. 3 residues coordinate tRNA: phenylalanine 65, asparagine 67, and asparagine 113.

The protein belongs to the PTH family. In terms of assembly, monomer.

Its subcellular location is the cytoplasm. The catalysed reaction is an N-acyl-L-alpha-aminoacyl-tRNA + H2O = an N-acyl-L-amino acid + a tRNA + H(+). Its function is as follows. Hydrolyzes ribosome-free peptidyl-tRNAs (with 1 or more amino acids incorporated), which drop off the ribosome during protein synthesis, or as a result of ribosome stalling. In terms of biological role, catalyzes the release of premature peptidyl moieties from peptidyl-tRNA molecules trapped in stalled 50S ribosomal subunits, and thus maintains levels of free tRNAs and 50S ribosomes. The chain is Peptidyl-tRNA hydrolase from Coxiella burnetii (strain RSA 331 / Henzerling II).